The primary structure comprises 79 residues: Protein NOI4 (79 aa).

Positions 31–68 are disordered; the sequence is KARDEKKTGGKPGSPGKSSEGHVKSGGGDPSKPQPKKW. Phosphoserine is present on serine 44.

Belongs to the RIN4 family. Proteolytic cleaved by P.syringae pv tomato AvrRpt2 after Gly-12; this cleavage is critical for subsequent proteasome-dependent elimination.

This chain is Protein NOI4, found in Arabidopsis thaliana (Mouse-ear cress).